The sequence spans 340 residues: Delta(1)-pyrroline-2-carboxylate reductase 2 (340 aa).

The active-site Charge relay system is the Ser50. His51 (proton donor) is an active-site residue. Position 55 (Arg55) interacts with substrate. 123–127 (HFSAL) is an NADP(+) binding site. Thr163 provides a ligand contact to substrate. Residue 181-183 (DFA) participates in NADP(+) binding. A substrate-binding site is contributed by 189 to 190 (RG). The active-site Charge relay system is Asp191. NADP(+)-binding positions include 232-233 (HK) and 307-313 (RLPSQRR).

This sequence belongs to the LDH2/MDH2 oxidoreductase family. As to quaternary structure, homodimer.

It carries out the reaction L-proline + NAD(+) = 1-pyrroline-2-carboxylate + NADH + H(+). The catalysed reaction is L-proline + NADP(+) = 1-pyrroline-2-carboxylate + NADPH + H(+). In terms of biological role, catalyzes the reduction of Delta(1)-pyrroline-2-carboxylate (Pyr2C) to L-proline, using NADPH as the electron donor. May be involved in a degradation pathway that converts trans-3-hydroxy-L-proline (t3LHyp) to L-proline. The protein is Delta(1)-pyrroline-2-carboxylate reductase 2 of Burkholderia multivorans (strain ATCC 17616 / 249).